Reading from the N-terminus, the 397-residue chain is Acetate kinase 1 (397 aa).

Asn8 serves as a coordination point for Mg(2+). Residue Lys15 coordinates ATP. A substrate-binding site is contributed by Arg89. Asp146 functions as the Proton donor/acceptor in the catalytic mechanism. ATP is bound by residues 206–210, 281–283, and 329–333; these read HLGNG, DLR, and GIGEN. Glu382 lines the Mg(2+) pocket.

The protein belongs to the acetokinase family. Homodimer. It depends on Mg(2+) as a cofactor. Requires Mn(2+) as cofactor.

The protein localises to the cytoplasm. It carries out the reaction acetate + ATP = acetyl phosphate + ADP. The protein operates within metabolic intermediate biosynthesis; acetyl-CoA biosynthesis; acetyl-CoA from acetate: step 1/2. Its function is as follows. Catalyzes the formation of acetyl phosphate from acetate and ATP. Can also catalyze the reverse reaction. The chain is Acetate kinase 1 from Listeria monocytogenes serovar 1/2a (strain ATCC BAA-679 / EGD-e).